The sequence spans 248 residues: tRNA pseudouridine synthase A (248 aa).

The Nucleophile role is filled by D55. Y114 lines the substrate pocket.

Belongs to the tRNA pseudouridine synthase TruA family. As to quaternary structure, homodimer.

The catalysed reaction is uridine(38/39/40) in tRNA = pseudouridine(38/39/40) in tRNA. In terms of biological role, formation of pseudouridine at positions 38, 39 and 40 in the anticodon stem and loop of transfer RNAs. This Rhodopseudomonas palustris (strain ATCC BAA-98 / CGA009) protein is tRNA pseudouridine synthase A.